A 139-amino-acid polypeptide reads, in one-letter code: Ribosome-binding factor A (139 aa).

Residues 112-139 are disordered; it reads EARTQGQAAPAPDVEPAPGAAPDDEAEE. Positions 119 to 132 are enriched in low complexity; it reads AAPAPDVEPAPGAA.

It belongs to the RbfA family. Monomer. Binds 30S ribosomal subunits, but not 50S ribosomal subunits or 70S ribosomes.

Its subcellular location is the cytoplasm. In terms of biological role, one of several proteins that assist in the late maturation steps of the functional core of the 30S ribosomal subunit. Associates with free 30S ribosomal subunits (but not with 30S subunits that are part of 70S ribosomes or polysomes). Required for efficient processing of 16S rRNA. May interact with the 5'-terminal helix region of 16S rRNA. This is Ribosome-binding factor A from Anaeromyxobacter dehalogenans (strain 2CP-1 / ATCC BAA-258).